The following is a 466-amino-acid chain: Ribulose bisphosphate carboxylase (466 aa).

Residue Asn111 participates in substrate binding. The active-site Proton acceptor is Lys166. Lys168 contributes to the substrate binding site. Residues Lys191, Asp193, and Glu194 each coordinate Mg(2+). Lys191 carries the N6-carboxylysine modification. His287 acts as the Proton acceptor in catalysis. Substrate is bound by residues Arg288, His321, and Ser368.

This sequence belongs to the RuBisCO large chain family. Type II subfamily. As to quaternary structure, homodimer. Mg(2+) serves as cofactor.

The enzyme catalyses 2 (2R)-3-phosphoglycerate + 2 H(+) = D-ribulose 1,5-bisphosphate + CO2 + H2O. It carries out the reaction D-ribulose 1,5-bisphosphate + O2 = 2-phosphoglycolate + (2R)-3-phosphoglycerate + 2 H(+). Functionally, ruBisCO catalyzes two reactions: the carboxylation of D-ribulose 1,5-bisphosphate, the primary event in carbon dioxide fixation, as well as the oxidative fragmentation of the pentose substrate. Both reactions occur simultaneously and in competition at the same active site. This Rhodospirillum rubrum (strain ATCC 11170 / ATH 1.1.1 / DSM 467 / LMG 4362 / NCIMB 8255 / S1) protein is Ribulose bisphosphate carboxylase.